Consider the following 204-residue polypeptide: GTP cyclohydrolase-2 (204 aa).

GTP is bound at residue 49–53; sequence RIHSE. Residues Cys54, Cys65, and Cys67 each contribute to the Zn(2+) site. Residues Gln70, 92–94, and Thr114 contribute to the GTP site; that span reads EGR. Residue Asp126 is the Proton acceptor of the active site. Arg128 serves as the catalytic Nucleophile. GTP contacts are provided by Thr149 and Lys154.

The protein belongs to the GTP cyclohydrolase II family. Requires Zn(2+) as cofactor.

The enzyme catalyses GTP + 4 H2O = 2,5-diamino-6-hydroxy-4-(5-phosphoribosylamino)-pyrimidine + formate + 2 phosphate + 3 H(+). The protein operates within cofactor biosynthesis; riboflavin biosynthesis; 5-amino-6-(D-ribitylamino)uracil from GTP: step 1/4. In terms of biological role, catalyzes the conversion of GTP to 2,5-diamino-6-ribosylamino-4(3H)-pyrimidinone 5'-phosphate (DARP), formate and pyrophosphate. The sequence is that of GTP cyclohydrolase-2 from Shewanella baltica (strain OS223).